Here is a 362-residue protein sequence, read N- to C-terminus: G-prodeshotein coupled receptor 4 (362 aa).

Residues 1-8 (MGNHTWEG) lie on the Extracellular side of the membrane. Asparagine 3 carries N-linked (GlcNAc...) asparagine glycosylation. Residues 9-45 (CHVDSRVDHLFPPSLYIFVIGVGLPTNCLALWAAYRQ) traverse the membrane as a helical segment. 2 disulfide bridges follow: cysteine 9/cysteine 258 and cysteine 90/cysteine 168. Residues 46 to 49 (VQQR) lie on the Cytoplasmic side of the membrane. A helical membrane pass occupies residues 50–80 (NELGVYLMNLSIADLLYICTLPLWVDYFLHH). The Extracellular portion of the chain corresponds to 81-85 (DNWIH). Residues 86–121 (GPGSCKLFGFIFYTNIYISIAFLCCISVDRYLAVAH) form a helical membrane-spanning segment. Topologically, residues 122 to 129 (PLRFARLR) are cytoplasmic. A helical transmembrane segment spans residues 130–156 (RVKTAVAVSSVVWATELGANSAPLFHD). Residues 157–172 (ELFRDRYNHTFCFEKF) are Extracellular-facing. Residues 157–172 (ELFRDRYNHTFCFEKF) form an extracellular loop 2 (ECL2) region. Asparagine 164 carries N-linked (GlcNAc...) asparagine glycosylation. Residues 173–210 (PMEGWVAWMNLYRVFVGFLFPWALMLLSYRGILRAVRG) traverse the membrane as a helical segment. Residues 211 to 214 (SVST) lie on the Cytoplasmic side of the membrane. Residues 215–250 (ERQEKAKIKRLALSLIAIVLVCFAPYHVLLLSRSAI) form a helical membrane-spanning segment. The Extracellular segment spans residues 251–260 (YLGRPWDCGF). Residues 261–289 (EERVFSAYHSSLAFTSLNCVADPILYCLV) traverse the membrane as a helical segment. Over 290–362 (NEGARSDVAK…VQLKMLPPAQ (73 aa)) the chain is Cytoplasmic. The tract at residues 335–362 (AKAMTGSWAATPPSQGDQVQLKMLPPAQ) is disordered.

Belongs to the G-protein coupled receptor 1 family.

The protein resides in the cell membrane. Activated by a network of residues that connects an extracellular-facing cavity to Glu-145, a conserved charged residue buried in the transmembrane core of the receptor. Protonation likely drives conformational changes in extracellular loop 2 (ECL2), which stabilizes movement of transmembrane 3 (TM3) and a series of rearrangements that connect the extracellular-facing cavity to Glu-145, a residue only conserved in proton-sensing G-protein coupled receptors. Its function is as follows. Proton-sensing G-protein coupled receptor activated by extracellular pH, which is required to monitor pH changes and generate adaptive reactions. Activated by an optimal pH of 6.8-7.2. Ligand binding causes a conformation change that triggers signaling via guanine nucleotide-binding proteins (G proteins) and modulates the activity of downstream effectors, such as adenylate cyclase. GPR4 is mainly coupled to G(s) G proteins and mediates activation of adenylate cyclase activity. May also couple with G(q) and G(12)/G(13) G proteins. Acts as a key regulator of respiratory sensitivity to CO2/H(+) in brain retrotrapezoid nucleus neurons: acts by mediating detection of protons generated by the formation of carbonic acid in the blood, an important mechanism to impulse to breathe. Also acts as a regulator of acid secretion in the kidney collecting duct by maintaining acid-base homeostasis in the kidney. Acidosis-induced GPR4 activation increases paracellular gap formation and permeability of vascular endothelial cells, possibly through the G(12)/G(13)/Rho GTPase signaling pathway. This is G-prodeshotein coupled receptor 4 from Homo sapiens (Human).